We begin with the raw amino-acid sequence, 496 residues long: Glycogen synthase (496 aa).

Lys15 contributes to the ADP-alpha-D-glucose binding site.

This sequence belongs to the glycosyltransferase 1 family. Bacterial/plant glycogen synthase subfamily.

The catalysed reaction is [(1-&gt;4)-alpha-D-glucosyl](n) + ADP-alpha-D-glucose = [(1-&gt;4)-alpha-D-glucosyl](n+1) + ADP + H(+). Its pathway is glycan biosynthesis; glycogen biosynthesis. Synthesizes alpha-1,4-glucan chains using ADP-glucose. In Natranaerobius thermophilus (strain ATCC BAA-1301 / DSM 18059 / JW/NM-WN-LF), this protein is Glycogen synthase.